The chain runs to 97 residues: Co-chaperonin GroES (97 aa).

The protein belongs to the GroES chaperonin family. In terms of assembly, heptamer of 7 subunits arranged in a ring. Interacts with the chaperonin GroEL.

It localises to the cytoplasm. Its function is as follows. Together with the chaperonin GroEL, plays an essential role in assisting protein folding. The GroEL-GroES system forms a nano-cage that allows encapsulation of the non-native substrate proteins and provides a physical environment optimized to promote and accelerate protein folding. GroES binds to the apical surface of the GroEL ring, thereby capping the opening of the GroEL channel. The protein is Co-chaperonin GroES of Yersinia enterocolitica.